Consider the following 85-residue polypeptide: Translation initiation factor IF-1 (85 aa).

The S1-like domain maps to 1–72 (MAKEELIEMH…SKGRITFRHI (72 aa)).

The protein belongs to the IF-1 family. In terms of assembly, component of the 30S ribosomal translation pre-initiation complex which assembles on the 30S ribosome in the order IF-2 and IF-3, IF-1 and N-formylmethionyl-tRNA(fMet); mRNA recruitment can occur at any time during PIC assembly.

The protein localises to the cytoplasm. Functionally, one of the essential components for the initiation of protein synthesis. Stabilizes the binding of IF-2 and IF-3 on the 30S subunit to which N-formylmethionyl-tRNA(fMet) subsequently binds. Helps modulate mRNA selection, yielding the 30S pre-initiation complex (PIC). Upon addition of the 50S ribosomal subunit IF-1, IF-2 and IF-3 are released leaving the mature 70S translation initiation complex. This is Translation initiation factor IF-1 from Polaromonas naphthalenivorans (strain CJ2).